The following is a 152-amino-acid chain: UPF0266 membrane protein YobD (152 aa).

The next 3 helical transmembrane spans lie at 6–26 (LVLI…QFIM), 45–65 (VDSV…VTSH), and 67–87 (AQMT…IFWI).

Belongs to the UPF0266 family.

Its subcellular location is the cell inner membrane. The protein is UPF0266 membrane protein YobD of Salmonella dublin (strain CT_02021853).